Here is a 91-residue protein sequence, read N- to C-terminus: Parbolysin P6 (91 aa).

Cystine bridges form between Cys-16–Cys-37, Cys-22–Cys-33, and Cys-47–Cys-60.

Belongs to the worm cytolysin family. As to expression, localized within the skin and proboscis and are most readily isolated from body mucus secretions.

Its subcellular location is the secreted. Functionally, cytolysin that shows hemolytic activity (on bovine erythrocytes, HC(50)=5.75 mg/ml). This hemolytic activity is completely inhibited by small unilamelar vesicles composed of PC/PG, PC/PI and PC/PS in 1:1 molar ratios (with at least 100 mg/ml concentration). The protein is Parbolysin P6 of Parborlasia corrugatus (Antarctic nemertean worm).